The primary structure comprises 94 residues: uncharacterized protein (94 aa).

The protein to M.tuberculosis Rv2632c.

This is an uncharacterized protein from Mycobacterium tuberculosis (strain CDC 1551 / Oshkosh).